The primary structure comprises 323 residues: Sphingolipid delta(4)-desaturase DES1 (323 aa).

Residue Gly-2 is the site of N-myristoyl glycine attachment. Helical transmembrane passes span 41-61 (PNLI…FYIV) and 68-88 (WVIF…TLAI). The Histidine box-1 motif lies at 89–93 (HEIAH). Residues 102 to 122 (AMWNRWFGMFANLPIGIPYSI) form a helical membrane-spanning segment. Residues 128–132 (HMDHH) carry the Histidine box-2 motif. The next 3 helical transmembrane spans lie at 152–172 (FFCT…FYAF), 184–204 (YLEV…YYFL), and 209–229 (LVYM…SGHF). The Histidine box-3 motif lies at 259–263 (HNEHH). Ser-307 is subject to Phosphoserine.

Belongs to the fatty acid desaturase type 1 family. DEGS subfamily. In terms of assembly, interacts with RLBP1; the interaction increases synthesis of chromophore-precursors by DEGS1. In terms of processing, myristoylation can target the enzyme to the mitochondria leading to an increase in ceramide levels. In terms of tissue distribution, ubiquitous.

The protein localises to the mitochondrion membrane. It localises to the endoplasmic reticulum membrane. It catalyses the reaction an N-acylsphinganine + 2 Fe(II)-[cytochrome b5] + O2 + 2 H(+) = an N-acylsphing-4-enine + 2 Fe(III)-[cytochrome b5] + 2 H2O. It carries out the reaction all-trans-retinol = 11-cis-retinol. The enzyme catalyses all-trans-retinol = 9-cis-retinol. The catalysed reaction is all-trans-retinol = 13-cis-retinol. It catalyses the reaction 11-cis-retinol = 13-cis-retinol. It carries out the reaction 11-cis-retinol = 9-cis-retinol. Functionally, has sphingolipid-delta-4-desaturase activity. Converts D-erythro-sphinganine to D-erythro-sphingosine (E-sphing-4-enine). Catalyzes the equilibrium isomerization of retinols. The sequence is that of Sphingolipid delta(4)-desaturase DES1 from Homo sapiens (Human).